Here is a 77-residue protein sequence, read N- to C-terminus: Acyl carrier protein (77 aa).

Residues 1–75 form the Carrier domain; that stretch reads MVFEKVKDII…DVVNYIKAHT (75 aa). Position 35 is an O-(pantetheine 4'-phosphoryl)serine (Ser-35).

It belongs to the acyl carrier protein (ACP) family. Post-translationally, 4'-phosphopantetheine is transferred from CoA to a specific serine of apo-ACP by AcpS. This modification is essential for activity because fatty acids are bound in thioester linkage to the sulfhydryl of the prosthetic group.

The protein resides in the cytoplasm. The protein operates within lipid metabolism; fatty acid biosynthesis. In terms of biological role, carrier of the growing fatty acid chain in fatty acid biosynthesis. The chain is Acyl carrier protein from Clostridium acetobutylicum (strain ATCC 824 / DSM 792 / JCM 1419 / IAM 19013 / LMG 5710 / NBRC 13948 / NRRL B-527 / VKM B-1787 / 2291 / W).